The following is a 767-amino-acid chain: Probable ubiquitin carboxyl-terminal hydrolase creB (767 aa).

Positions 49-462 (YGMENYGNTC…CAYVLFYQET (414 aa)) constitute a USP domain. C58 functions as the Nucleophile in the catalytic mechanism. Disordered stretches follow at residues 107 to 140 (EAEAQAEKQKAANAQRPGMPPNPQQKPEDKDSPE) and 232 to 263 (ASKQPPIEKSLPAPETADSVDQSSSTGSKTPN). Residues 250–263 (SVDQSSSTGSKTPN) are compositionally biased toward polar residues. H413 functions as the Proton acceptor in the catalytic mechanism. The disordered stretch occupies residues 490 to 767 (LKQNGFPQSP…LRKKSFSILS (278 aa)). Low complexity-rich tracts occupy residues 540 to 554 (ESAPFSPLSPLSPLS) and 564 to 573 (ERVTTVATPP). Residues 574 to 641 (KNDALAKKER…ASKAEEDRRL (68 aa)) are a coiled coil. The segment covering 577–650 (ALAKKERARE…LSHENGKEKQ (74 aa)) has biased composition (basic and acidic residues). Positions 656–667 (RLKRGSKSLSHR) are enriched in basic residues. A compositionally biased stretch (polar residues) spans 690–700 (STLSQTGPTSE). Positions 701–713 (QQQQQQQQQQQQQ) are enriched in low complexity. Over residues 731 to 749 (TIREDEQVNHKDSKHERTG) the composition is skewed to basic and acidic residues. Over residues 750 to 767 (HGKWRSFSLRKKSFSILS) the composition is skewed to basic residues.

Belongs to the peptidase C19 family. As to quaternary structure, interacts with creA, creC and qutD.

The catalysed reaction is Thiol-dependent hydrolysis of ester, thioester, amide, peptide and isopeptide bonds formed by the C-terminal Gly of ubiquitin (a 76-residue protein attached to proteins as an intracellular targeting signal).. Ubiquitin thioesterase component of the regulatory network controlling carbon source utilization through ubiquitination and deubiquitination involving creA, creB, creC, creD and acrB. Deubiquitinates the creA catabolic repressor and the quinate permease qutD. Also plays a role in response to carbon starvation and the control of extracellular proteases activity. The polypeptide is Probable ubiquitin carboxyl-terminal hydrolase creB (creB) (Aspergillus fumigatus (strain CBS 144.89 / FGSC A1163 / CEA10) (Neosartorya fumigata)).